The primary structure comprises 418 residues: Putative competence-damage inducible protein (418 aa).

Belongs to the CinA family.

This chain is Putative competence-damage inducible protein, found in Streptococcus pneumoniae (strain 70585).